The chain runs to 341 residues: Phenylalanine--tRNA ligase alpha subunit (341 aa).

Mg(2+) is bound at residue E254.

This sequence belongs to the class-II aminoacyl-tRNA synthetase family. Phe-tRNA synthetase alpha subunit type 1 subfamily. Tetramer of two alpha and two beta subunits. Mg(2+) is required as a cofactor.

The protein resides in the cytoplasm. The enzyme catalyses tRNA(Phe) + L-phenylalanine + ATP = L-phenylalanyl-tRNA(Phe) + AMP + diphosphate + H(+). The polypeptide is Phenylalanine--tRNA ligase alpha subunit (Chlorobaculum tepidum (strain ATCC 49652 / DSM 12025 / NBRC 103806 / TLS) (Chlorobium tepidum)).